We begin with the raw amino-acid sequence, 622 residues long: UvrABC system protein C (622 aa).

Residues 13-92 (EKPGVYLMKN…IKKYRPKYNI (80 aa)) enclose the GIY-YIG domain. In terms of domain architecture, UVR spans 204-239 (KDILDKLKNQMEEASNSLQFEKAASLRDKIFAVKKI).

It belongs to the UvrC family. In terms of assembly, interacts with UvrB in an incision complex.

It localises to the cytoplasm. Functionally, the UvrABC repair system catalyzes the recognition and processing of DNA lesions. UvrC both incises the 5' and 3' sides of the lesion. The N-terminal half is responsible for the 3' incision and the C-terminal half is responsible for the 5' incision. The sequence is that of UvrABC system protein C from Clostridium tetani (strain Massachusetts / E88).